The following is an 86-amino-acid chain: Electron transfer flavoprotein regulatory factor 1 (86 aa).

The protein belongs to the complex I LYR family. In terms of assembly, homotetramer. Interacts with NDUFAB1. Interacts with ETFA. Interacts with ETFB.

It localises to the mitochondrion. In terms of biological role, acts as a regulator of the electron transfer flavoprotein by promoting the removal of flavin from the ETF holoenzyme (composed of ETFA and ETFB). The polypeptide is Electron transfer flavoprotein regulatory factor 1 (Mus musculus (Mouse)).